Reading from the N-terminus, the 422-residue chain is 2,3-bisphosphoglycerate-independent phosphoglycerate mutase (422 aa).

The tract at residues 173-194 (DADPKRVGKPVKDVKPTSDDPA) is disordered. A compositionally biased stretch (basic and acidic residues) spans 174 to 190 (ADPKRVGKPVKDVKPTS).

This sequence belongs to the BPG-independent phosphoglycerate mutase family. A-PGAM subfamily.

The enzyme catalyses (2R)-2-phosphoglycerate = (2R)-3-phosphoglycerate. It functions in the pathway carbohydrate degradation; glycolysis; pyruvate from D-glyceraldehyde 3-phosphate: step 3/5. Its function is as follows. Catalyzes the interconversion of 2-phosphoglycerate and 3-phosphoglycerate. The sequence is that of 2,3-bisphosphoglycerate-independent phosphoglycerate mutase from Methanopyrus kandleri (strain AV19 / DSM 6324 / JCM 9639 / NBRC 100938).